Here is a 2014-residue protein sequence, read N- to C-terminus: AP-1 accessory protein LAA1 (2014 aa).

Interacts with the clathrin-associated adapter complex AP-1. Interacts directly with LAA2.

The protein localises to the golgi apparatus. The protein resides in the cytoplasmic vesicle. Its subcellular location is the clathrin-coated vesicle. Functionally, involved in localization of clathrin adapter protein complex-1 (AP-1) and subsequent AP-1-mediated clathrin-coated vesicle cargo loading. In complex with LAA2, cooperates with the small GTPase ARF1 and the phosphatidyl-inositol-4-phosphate (PI4P) synthesis to confer temporal specificity to AP-1 recruitment. This Saccharomyces cerevisiae (strain ATCC 204508 / S288c) (Baker's yeast) protein is AP-1 accessory protein LAA1.